A 600-amino-acid polypeptide reads, in one-letter code: Kelch-like protein 24 (600 aa).

The region spanning 66-133 (TDVIICVEGK…VYTGKVKITT (68 aa)) is the BTB domain. The BACK domain occupies 168-270 (CLGIQRFADT…HPNYFVQTVE (103 aa)). Kelch repeat units follow at residues 314-363 (VIVV…ALRN), 365-407 (ILVS…VLLG), 408-454 (KVYV…SCVG), 456-502 (LFVI…SLNN), 504-544 (IYVA…VCNG), and 546-592 (IYIL…TIHR).

Forms homodimers. Interacts with GRIK2. Component of the BCR(KLHL24) E3 ubiquitin ligase complex, composed of CUL3, RBX1 and KLHL24. Interacts with CUL3. Interacts with KRT14. In terms of processing, autoubiquitinated. Autoubiquitination leads to proteasomal degradation and is necessary to control KLHL24 levels. Expressed in the skin. Found in keratinocytes, dermal fibroblasts, and melanocytes. Basal-layer keratinocytes have lower KLHL24 expression than suprabasal keratinocytes. Expressed in the brain, spinal cord, liver, testis, heart and at higher levels in the skeletal muscle.

It is found in the perikaryon. Its subcellular location is the cell projection. It localises to the axon. The protein resides in the cytoplasm. The protein localises to the cell junction. It is found in the desmosome. Its subcellular location is the adherens junction. Functionally, necessary to maintain the balance between intermediate filament stability and degradation, a process that is essential for skin integrity. As part of the BCR(KLHL24) E3 ubiquitin ligase complex, mediates ubiquitination of KRT14 and controls its levels during keratinocytes differentiation. Specifically reduces kainate receptor-mediated currents in hippocampal neurons, most probably by modulating channel properties. Has a crucial role in cardiac development and function. In Homo sapiens (Human), this protein is Kelch-like protein 24 (KLHL24).